A 477-amino-acid polypeptide reads, in one-letter code: Tripartite motif-containing protein 72 (477 aa).

Zn(2+)-binding residues include L14, P17, P29, C31, T34, Q37, T53, P56, G86, L89, V97, E100, L105, G108, G114, and K117. Residues 16-59 (CPLCLELFRAPVTPECGHTFCQGCLTGAPKNQDQNGSTPCPTCQ) form an RING-type zinc finger. The B box-type zinc-finger motif lies at 83–124 (VPKGHCLEHLDPLSVYCEQDKELICGVCASLGKHKGHNIITA). Positions 135–232 (LPQQQVILQE…QMDGVLKDVE (98 aa)) form a coiled coil. The region spanning 272–476 (DEFKFQVWRK…LKIFYPPAEQ (205 aa)) is the B30.2/SPRY domain.

This sequence belongs to the TRIM/RBCC family. As to quaternary structure, homodimer. Homooligomer; disulfide-linked. Oligomerizes on the phospholipid membrane. In terms of processing, disulfide bond formation at Cys-244 occurs in case of membrane damage that cause the entry of the oxidized milieu of the extracellular space, resulting in homooligomerization.

The protein localises to the cell membrane. It localises to the sarcolemma. The protein resides in the cytoplasmic vesicle membrane. The catalysed reaction is S-ubiquitinyl-[E2 ubiquitin-conjugating enzyme]-L-cysteine + [acceptor protein]-L-lysine = [E2 ubiquitin-conjugating enzyme]-L-cysteine + N(6)-ubiquitinyl-[acceptor protein]-L-lysine.. It functions in the pathway protein modification; protein ubiquitination. With respect to regulation, specifically binds phosphatidylserine. The binding to phospholipids enhances ubiquitination activity. Its function is as follows. Muscle-specific E3 ubiquitin-protein ligase that plays a central role in cell membrane repair by nucleating the assembly of the repair machinery at injury sites. Acts as a sensor of oxidation: upon membrane damage, entry of extracellular oxidative environment results in disulfide bond formation and homooligomerization at the injury site. This oligomerization acts as a nucleation site for recruitment of TRIM72-containing vesicles to the injury site, leading to membrane patch formation. Probably acts upstream of the Ca(2+)-dependent membrane resealing process. Required for transport of DYSF to sites of cell injury during repair patch formation. Regulates membrane budding and exocytosis. May be involved in the regulation of the mobility of KCNB1-containing endocytic vesicles. The protein is Tripartite motif-containing protein 72 (trim72) of Xenopus tropicalis (Western clawed frog).